The chain runs to 385 residues: Cytochrome b (385 aa).

4 consecutive transmembrane segments (helical) span residues 34–54 (FGSLTGLCLALQIISGLLLTM), 78–99 (WFIRNVHISGASLFFTCMFIHI), 114–134 (WYSGVILFILSMLTAFLGYVL), and 179–199 (FLVLHFLMPFSMIAVSLIHLV). 2 residues coordinate heme b: His-84 and His-98. Heme b is bound by residues His-183 and His-197. His-202 contacts a ubiquinone. The next 4 membrane-spanning stretches (helical) occupy residues 227–247 (FKDILGFSFLLTFLITFSLLL), 289–309 (LAGIIALVMSLSVLLLMPILI), 321–341 (LMQVTFWLMVCNFIFLSWLGA), and 348–368 (FILMSQISSFIYFFIFFVMFP).

Belongs to the cytochrome b family. As to quaternary structure, the cytochrome bc1 complex contains 3 respiratory subunits (MT-CYB, CYC1 and UQCRFS1), 2 core proteins (UQCRC1 and UQCRC2) and probably 6 low-molecular weight proteins. Heme b is required as a cofactor.

It is found in the mitochondrion inner membrane. In terms of biological role, component of the ubiquinol-cytochrome c reductase complex (complex III or cytochrome b-c1 complex) that is part of the mitochondrial respiratory chain. The b-c1 complex mediates electron transfer from ubiquinol to cytochrome c. Contributes to the generation of a proton gradient across the mitochondrial membrane that is then used for ATP synthesis. In Eptatretus burgeri (Inshore hagfish), this protein is Cytochrome b (MT-CYB).